The primary structure comprises 476 residues: tRNA(Ile)-lysidine synthase (476 aa).

Ser-26–Ser-31 is an ATP binding site.

The protein belongs to the tRNA(Ile)-lysidine synthase family.

It localises to the cytoplasm. The catalysed reaction is cytidine(34) in tRNA(Ile2) + L-lysine + ATP = lysidine(34) in tRNA(Ile2) + AMP + diphosphate + H(+). Ligates lysine onto the cytidine present at position 34 of the AUA codon-specific tRNA(Ile) that contains the anticodon CAU, in an ATP-dependent manner. Cytidine is converted to lysidine, thus changing the amino acid specificity of the tRNA from methionine to isoleucine. This is tRNA(Ile)-lysidine synthase from Bartonella quintana (strain Toulouse) (Rochalimaea quintana).